Here is a 113-residue protein sequence, read N- to C-terminus: uncharacterized protein (113 aa).

The interval 28 to 55 is disordered; that stretch reads CDGGPRRPLSRRGEEARRARAPSYEEQE.

This is an uncharacterized protein from Human cytomegalovirus (strain AD169) (HHV-5).